The chain runs to 551 residues: Solute carrier family 22 member 3 (551 aa).

A helical transmembrane segment spans residues 21–41 (VFLLLCLTGVTFAFLFVGVVF). Residues Asn-72, Asn-99, and Asn-114 are each glycosylated (N-linked (GlcNAc...) asparagine). The helical transmembrane segment at 177–197 (LIIYLISCFGVGITGVVVAFA) threads the bilayer. Asn-199 carries an N-linked (GlcNAc...) asparagine glycan. 2 helical membrane passes run 236 to 256 (IVGIVIQMFFTLGIIILPGIA) and 264 to 284 (GIQLAISLPSFLFLLYYWVVP). A Proline-rich sequence motif is present at residues 284–288 (PESPR). N-linked (GlcNAc...) asparagine glycosylation occurs at Asn-317. Helical transmembrane passes span 376-396 (IDFFISGLVELPGALLILLTI), 464-484 (GVSLCSGLCDFGGIIAPFLLF), and 493-513 (LPLIIFGILASVCGGLVMLLP).

The protein belongs to the major facilitator (TC 2.A.1) superfamily. Organic cation transporter (TC 2.A.1.19) family. As to expression, highly expressed in placenta. Highly expressed in kidney cortex. In kidney, expressed specifically in the proximal and distal convoluted tubules and within Bowman capsule. Expressed in brain, particularly in dopaminergic neurons of the substantia nigra compacta, non-aminergic neurons of the ventral tegmental area, substantia nigra reticulata, locus coeruleus, hippocampus and cortex. In brain, also detected in astrocytes in the substantia nigra reticulata, several hypothalamic nuclei and nigrostriatal region. Expressed in neurons and glial cells of amygdala.

The protein resides in the cell membrane. Its subcellular location is the apical cell membrane. The protein localises to the basolateral cell membrane. It is found in the mitochondrion membrane. It localises to the endomembrane system. The protein resides in the nucleus membrane. Its subcellular location is the nucleus outer membrane. The catalysed reaction is (R)-noradrenaline(out) = (R)-noradrenaline(in). It catalyses the reaction (R)-adrenaline(out) = (R)-adrenaline(in). It carries out the reaction serotonin(out) = serotonin(in). The enzyme catalyses dopamine(out) = dopamine(in). The catalysed reaction is histamine(out) = histamine(in). It catalyses the reaction tyramine(in) = tyramine(out). It carries out the reaction guanidine(out) = guanidine(in). The enzyme catalyses agmatine(out) = agmatine(in). The catalysed reaction is spermidine(in) = spermidine(out). It catalyses the reaction L-histidyl-L-proline diketopiperazine(in) = L-histidyl-L-proline diketopiperazine(out). It carries out the reaction (R)-salsolinol(in) = (R)-salsolinol(out). Functionally, electrogenic voltage-dependent transporter that mediates the transport of a variety of organic cations such as endogenous bioactive amines, cationic drugs and xenobiotics. Cation cellular uptake or release is driven by the electrochemical potential, i.e. membrane potential and concentration gradient. Functions as a Na(+)- and Cl(-)-independent, bidirectional uniporter. Implicated in monoamine neurotransmitters uptake such as dopamine, adrenaline/epinephrine, noradrenaline/norepinephrine, homovanillic acid, histamine, serotonin and tyramine, thereby supporting a role in homeostatic regulation of aminergic neurotransmission in the brain. Transports dopaminergic neuromodulators cyclo(his-pro) and salsolinol with low efficiency. May be involved in the uptake and disposition of cationic compounds by renal clearance from the blood flow. May contribute to regulate the transport of cationic compounds in testis across the blood-testis-barrier. Mediates the transport of polyamine spermidine and putrescine. Mediates the bidirectional transport of polyamine agmatine. Also transports guanidine. May also mediate intracellular transport of organic cations, thereby playing a role in amine metabolism and intracellular signaling. In Mus musculus (Mouse), this protein is Solute carrier family 22 member 3.